The primary structure comprises 478 residues: Calcium/calmodulin-dependent protein kinase type II subunit alpha (478 aa).

Tyrosine 13 carries the post-translational modification Phosphotyrosine. One can recognise a Protein kinase domain in the interval 13 to 271; the sequence is YQLFEELGKG…AAEALKHPWI (259 aa). ATP-binding positions include 19–27 and lysine 42; that span reads LGKGAFSVV. The Proton acceptor role is filled by aspartate 135. Serine 257 carries the post-translational modification Phosphoserine. Position 286 is a phosphothreonine; by autocatalysis (threonine 286). Positions 290-300 are calmodulin-binding; it reads LKKFNARRKLK. The interaction with BAALC stretch occupies residues 310-320; sequence TRNFSGGKSGG. A disordered region spans residues 314 to 341; sequence SGGKSGGNKKSDGVKESSESTNTTIEDE. The segment covering 322–331 has biased composition (basic and acidic residues); the sequence is KKSDGVKESS. Residues serine 330, serine 331, and serine 333 each carry the phosphoserine modification. Residues threonine 336 and threonine 337 each carry the phosphothreonine modification. Serine 404 bears the Phosphoserine mark.

This sequence belongs to the protein kinase superfamily. CAMK Ser/Thr protein kinase family. CaMK subfamily. There are 4 genes encoding calcium/calmodulin-dependent protein kinase type II chains: CAMK2A, CAMK2B, CAMK2G and CAMK2D. The corresponding proteins assemble into homo- or heteromultimeric holoenzymes composed of 12 subunits with two hexameric rings stacked one on top of the other. Interacts with BAALC. Interacts with MPDZ. Interacts with SYN1. Interacts with CAMK2N2. Interacts with SYNGAP1. Interacts with SYNPO2. Interacts with SHANK3. Interacts with GRIN2B. Interacts with CACNB2. Interacts with LRRC7. Interacts with GRM5. Interacts with DAGLA (via C-terminal); this interaction is enhanced by autophosphorylation of CAMK2A at Thr-286. Interacts with CAMK2N1; this interaction requires CAMK2A activation by Ca(2+). The cofactor is Mg(2+). Post-translationally, autophosphorylation of Thr-286 following activation by Ca(2+)/calmodulin. Phosphorylation of Thr-286 locks the kinase into an activated state. In terms of processing, palmitoylated. Probably palmitoylated by ZDHHC3 and ZDHHC7.

Its subcellular location is the synapse. The protein localises to the postsynaptic density. It localises to the cell projection. The protein resides in the dendritic spine. It is found in the dendrite. It carries out the reaction L-seryl-[protein] + ATP = O-phospho-L-seryl-[protein] + ADP + H(+). The catalysed reaction is L-threonyl-[protein] + ATP = O-phospho-L-threonyl-[protein] + ADP + H(+). Activated by Ca(2+)/calmodulin. Binding of calmodulin results in conformational change that relieves intrasteric autoinhibition and allows autophosphorylation of Thr-286 which turns the kinase in a constitutively active form and confers to the kinase a Ca(2+)-independent activity. Its function is as follows. Calcium/calmodulin-dependent protein kinase that functions autonomously after Ca(2+)/calmodulin-binding and autophosphorylation, and is involved in various processes, such as synaptic plasticity, neurotransmitter release and long-term potentiation. Member of the NMDAR signaling complex in excitatory synapses, it regulates NMDAR-dependent potentiation of the AMPAR and therefore excitatory synaptic transmission. Regulates dendritic spine development. Also regulates the migration of developing neurons. Phosphorylates the transcription factor FOXO3 to activate its transcriptional activity. Phosphorylates the transcription factor ETS1 in response to calcium signaling, thereby decreasing ETS1 affinity for DNA. In response to interferon-gamma (IFN-gamma) stimulation, catalyzes phosphorylation of STAT1, stimulating the JAK-STAT signaling pathway. In response to interferon-beta (IFN-beta) stimulation, stimulates the JAK-STAT signaling pathway. Acts as a negative regulator of 2-arachidonoylglycerol (2-AG)-mediated synaptic signaling via modulation of DAGLA activity. This Pongo abelii (Sumatran orangutan) protein is Calcium/calmodulin-dependent protein kinase type II subunit alpha (CAMK2A).